A 486-amino-acid polypeptide reads, in one-letter code: MDSAERPLRIPPEMVIYAEKHDIFHLIQTLVRNLMVDKPDDPIQYLINFLERDNVDVPRIILLGPPASGKKTVAKKLCEHTQAIHITFCDILKDDSDLTRAAQSYYDKKQNVPKDLWIQLIQQRLSKPDCVQRGWVLEAIPKTQDEALCLQEAGITPDHVVMLEAPDVVLIERSSGKRIDPVTGDVYHVTFMWPESEEVAQRLETPRTLMPVQVMSQKLQKYHTEAHALKRTYHNCLKIINADQPHVDVFSQVLNFICTPRHSPSPYTPRILLFGPPGAGRNLQAKLIAQKYGIINICCGELLKAVSADESHMGELIKPYLESEQQVPSSIVLRVLTERLSRMDCTARGWVLHGFPRDVEEAELLHKSNFTPNRVFFLEITDDIAIERLALRAVDPVTGEWYHSVYKPPPGPEVQARLRFNPQHSEAQLLMRLKEYWSQTVRLQAFYPQAVYINADQDPHTVFESLESRLVGQLPKVLSNQQTNEN.

Adenylate kinase regions lie at residues 58 to 258 (PRII…NFIC) and 269 to 471 (PRIL…SRLV). Residue 67-72 (ASGKKT) coordinates ATP. The tract at residues 87–112 (TFCDILKDDSDLTRAAQSYYDKKQNV) is NMP 1. Residues 139-142 (AIPK) and Arg-202 each bind AMP. An LID 1 region spans residues 176–205 (GKRIDPVTGDVYHVTFMWPESEEVAQRLET). 278 to 283 (GAGRNL) contacts ATP. The interval 298-327 (CCGELLKAVSADESHMGELIKPYLESEQQV) is NMP 2. AMP is bound by residues 325 to 327 (QQV) and 354 to 357 (GFPR). The LID 2 stretch occupies residues 391-424 (LRAVDPVTGEWYHSVYKPPPGPEVQARLRFNPQH). Arg-392 contributes to the ATP binding site. Arg-432 contributes to the AMP binding site.

It belongs to the adenylate kinase family.

Its subcellular location is the cytoplasm. It localises to the cytosol. The enzyme catalyses AMP + ATP = 2 ADP. It carries out the reaction a 2'-deoxyribonucleoside 5'-diphosphate + ATP = a 2'-deoxyribonucleoside 5'-triphosphate + ADP. The catalysed reaction is a ribonucleoside 5'-diphosphate + ATP = a ribonucleoside 5'-triphosphate + ADP. Functionally, nucleoside monophosphate (NMP) kinase that catalyzes the reversible transfer of the terminal phosphate group between nucleoside triphosphates and monophosphates. Has highest activity toward AMP, and weaker activity toward dAMP, CMP and dCMP. Also displays broad nucleoside diphosphate kinase activity. The sequence is that of Adenylate kinase 8 (ak8) from Danio rerio (Zebrafish).